Reading from the N-terminus, the 295-residue chain is Inward rectifier potassium channel Kirbac3.1 (295 aa).

The Cytoplasmic portion of the chain corresponds to 1–47; sequence MTGGMKPPARKPRILNSDGSSNITRLGLEKRGWLDDHYHDLLTVSWP. A helical membrane pass occupies residues 48–69; sequence VFITLITGLYLVTNALFALAYL. At 70–82 the chain is on the extracellular side; that stretch reads ACGDVIENARPGS. Positions 83–95 form an intramembrane region, helical; Pore-forming; the sequence is FTDAFFFSVQTMA. A Selectivity filter motif is present at residues 96-100; the sequence is TIGYG. Residues 107–131 traverse the membrane as a helical segment; it reads PLANTLVTLEALCGMLGLAVAASLI. Residues 132 to 295 lie on the Cytoplasmic side of the membrane; the sequence is YARFTRPTAG…DLGKFHEIAQ (164 aa).

This sequence belongs to the inward rectifier-type potassium channel (TC 1.A.2.1) family. KCNJ11 subfamily. Homotetramer.

The protein resides in the membrane. Functionally, inward rectifier potassium channel that mediates potassium uptake into the cell. Inward rectifier potassium channels are characterized by a greater tendency to allow potassium to flow into the cell rather than out of it. The inward rectification may be achieved by the blockage of outward current by cytoplasmic divalent metal ions and polyamines. Complements an E.coli mutant that is defective in K(+) uptake. The polypeptide is Inward rectifier potassium channel Kirbac3.1 (Paramagnetospirillum magnetotacticum (Aquaspirillum magnetotacticum)).